The following is a 464-amino-acid chain: Soluble pyridine nucleotide transhydrogenase (464 aa).

Asp35–Cys44 contacts FAD.

The protein belongs to the class-I pyridine nucleotide-disulfide oxidoreductase family. FAD is required as a cofactor.

It is found in the cytoplasm. It catalyses the reaction NAD(+) + NADPH = NADH + NADP(+). Its function is as follows. Conversion of NADPH, generated by peripheral catabolic pathways, to NADH, which can enter the respiratory chain for energy generation. The protein is Soluble pyridine nucleotide transhydrogenase of Pseudomonas entomophila (strain L48).